The primary structure comprises 503 residues: ATP synthase subunit alpha (503 aa).

170–177 (GDRQTGKT) is a binding site for ATP.

Belongs to the ATPase alpha/beta chains family. In terms of assembly, F-type ATPases have 2 components, CF(1) - the catalytic core - and CF(0) - the membrane proton channel. CF(1) has five subunits: alpha(3), beta(3), gamma(1), delta(1), epsilon(1). CF(0) has three main subunits: a(1), b(2) and c(9-12). The alpha and beta chains form an alternating ring which encloses part of the gamma chain. CF(1) is attached to CF(0) by a central stalk formed by the gamma and epsilon chains, while a peripheral stalk is formed by the delta and b chains.

Its subcellular location is the cell inner membrane. The enzyme catalyses ATP + H2O + 4 H(+)(in) = ADP + phosphate + 5 H(+)(out). In terms of biological role, produces ATP from ADP in the presence of a proton gradient across the membrane. The alpha chain is a regulatory subunit. The protein is ATP synthase subunit alpha of Geobacter sulfurreducens (strain ATCC 51573 / DSM 12127 / PCA).